The following is a 58-amino-acid chain: Small ribosomal subunit protein bS21 (58 aa).

The protein belongs to the bacterial ribosomal protein bS21 family.

This is Small ribosomal subunit protein bS21 from Prochlorococcus marinus (strain MIT 9301).